Here is a 442-residue protein sequence, read N- to C-terminus: Protein translocase subunit SecF (442 aa).

Residues 1 to 39 (MASKAKTGRDDEATSAVELTEATESAVARTDGDSTTDTA) are disordered. 6 consecutive transmembrane segments (helical) span residues 67 to 87 (WFGV…FRGF), 187 to 207 (ITKK…LYIT), 218 to 238 (AITA…LVGF), 243 to 263 (ATVI…VIVF), 301 to 321 (LIGV…LGVG), and 331 to 351 (LIGI…LLVT). The segment at 366–442 (VLKRRNSGSP…PTGKRNAGRR (77 aa)) is disordered. The span at 402 to 432 (QASSQSAPRAAQGSSKPAPGARPVRPVGTRR) shows a compositional bias: low complexity. Residues 433-442 (PTGKRNAGRR) show a composition bias toward basic residues.

Belongs to the SecD/SecF family. SecF subfamily. As to quaternary structure, forms a complex with SecD. Part of the essential Sec protein translocation apparatus which comprises SecA, SecYEG and auxiliary proteins SecDF. Other proteins may also be involved.

The protein localises to the cell membrane. Functionally, part of the Sec protein translocase complex. Interacts with the SecYEG preprotein conducting channel. SecDF uses the proton motive force (PMF) to complete protein translocation after the ATP-dependent function of SecA. This is Protein translocase subunit SecF from Mycobacterium tuberculosis (strain ATCC 25618 / H37Rv).